A 435-amino-acid polypeptide reads, in one-letter code: Minor fimbrial subunit HifE (435 aa).

An N-terminal signal peptide occupies residues 1 to 31 (MKTLTTYAKYFTPISKIAFLFCFLMGNIAEA).

This sequence belongs to the fimbrial protein family.

The protein localises to the fimbrium. Functionally, may be a minor structural protein required for pilus biogenesis. May be the adhesive component in the pili. This Haemophilus influenzae protein is Minor fimbrial subunit HifE (hifE).